The primary structure comprises 622 residues: MHPEVSEPQADGATEPSLEESAGDHGRAGPGVRKEEINETKETCVGPSTTSCQSQKQQSGDSRLDCRSGYARNDRDDRGPRMTKEFLQKLCKQHKLYITPALNDTLYLHFKGFDRIENLEEYTGLRCLWLECNGIQRIENLQAQSELRCLFLQVNLLHKIENLEPLQKLDALNLSNNYIKTIENLSCLPVLNTLQMAHNRLETVADIQHLRECLRLCVLDLSHNMLSDPEILSVLESMPCLRVLNLMGNPVTKHIPNYRRTVTVRLKQLTYLDDRPVFPKDRACAEAWARGGYAAEKEERLQWESREHKKITDSLEALAMIKRRAEERKKARDKGETPLPDSEESSSTSPEAQDKPPLGETQQKIEVFVEESFKVKDELFPEKPGGEEELAVVEDRTMEEPDLPGSLAQSQTLLVATAEESTSSVAATDGTGTEDTEAIALETKERLFIDDLPDLEDVDGMDMSMEDQTKEMGIPKIQVISSLSDDSDPELNDSPLPMLEHTPTGSTGVLSNIFAVCKDSSKAVRVPLTDICEPRATTELETQGQVFSTTPPRPLIQELEEDGRGENESKPSLPAQSSEDGDSQLPEATLLGDRAENEAQSSLDLGKPSPRASLEDIEFGLD.

Residues Met-1 to Pro-80 are disordered. A compositionally biased stretch (basic and acidic residues) spans Ala-22 to Glu-42. Residues Ser-48 to Ser-59 show a composition bias toward low complexity. A compositionally biased stretch (basic and acidic residues) spans Ser-62–Pro-80. LRR repeat units lie at residues Ala-101–Thr-123, Gly-124–Ser-145, Glu-146–Gln-167, Lys-168–Pro-189, Val-190–Arg-211, and Arg-215–Glu-236. One can recognise an LRRCT domain in the interval Asn-249–Trp-288. The segment covering Glu-326–Glu-336 has biased composition (basic and acidic residues). The segment at Glu-326 to Glu-360 is disordered. Residues Thr-337 to Glu-351 are compositionally biased toward low complexity. Phosphoserine occurs at positions 349, 464, and 487. Disordered regions lie at residues Ser-481 to Pro-503 and Leu-540 to Asp-622. A compositionally biased stretch (polar residues) spans Leu-540–Thr-550.

The protein belongs to the DNAAF1 family.

The protein resides in the cell projection. Its subcellular location is the cilium. Cilium-specific protein required for the stability of the ciliary architecture. Plays a role in cytoplasmic preassembly of dynein arms. Involved in regulation of microtubule-based cilia and actin-based brush border microvilli. The sequence is that of Dynein axonemal assembly factor 1 (Dnaaf1) from Peromyscus leucopus (White-footed mouse).